The primary structure comprises 282 residues: Ribosome biogenesis GTPase A (282 aa).

A CP-type G domain is found at 14-178 (RREVTEKLKL…LLDTPGILWP (165 aa)). Residues 58–61 (NKAD), 86–87 (NS), 130–135 (NVGKST), and Gly174 each bind GTP.

This sequence belongs to the TRAFAC class YlqF/YawG GTPase family. MTG1 subfamily. As to quaternary structure, interacts with ctc. Interacts with the immature 50S ribosome subunit. 2 molecules of rbgA bind to one 50S subunit.

It is found in the cytoplasm. Functionally, essential protein that is required for a late step of 50S ribosomal subunit assembly. Has GTPase activity that is stimulated by interaction with the immature 50S ribosome subunit. Binds to the 23S rRNA. Required for the association of ribosomal proteins rplP and rpmA with the large subunit. This is Ribosome biogenesis GTPase A from Bacillus pumilus (strain SAFR-032).